The sequence spans 177 residues: Nucleoside triphosphate/diphosphate phosphatase (177 aa).

Arg-23 serves as the catalytic Proton donor. Asn-87, Asp-103, Asp-105, Asp-107, Asp-120, and Glu-123 together coordinate Mg(2+).

Belongs to the Ntdp family. The cofactor is Mg(2+).

The enzyme catalyses a ribonucleoside 5'-triphosphate + H2O = a ribonucleoside 5'-diphosphate + phosphate + H(+). It catalyses the reaction a ribonucleoside 5'-diphosphate + H2O = a ribonucleoside 5'-phosphate + phosphate + H(+). Its function is as follows. Has nucleoside phosphatase activity towards nucleoside triphosphates and nucleoside diphosphates. This chain is Nucleoside triphosphate/diphosphate phosphatase, found in Streptococcus pyogenes serotype M1.